The following is a 311-amino-acid chain: Oxygen-dependent coproporphyrinogen-III oxidase (311 aa).

Serine 93 contacts substrate. The a divalent metal cation site is built by histidine 97 and histidine 107. Histidine 107 functions as the Proton donor in the catalytic mechanism. Substrate is bound at residue 109 to 111 (NVR). A divalent metal cation-binding residues include histidine 153 and histidine 184. The tract at residues 252 to 287 (YVEFNLVFDRGTLFGLQSGGRTESILMSLPPVVKWR) is important for dimerization. Residue 270 to 272 (GGR) coordinates substrate.

The protein belongs to the aerobic coproporphyrinogen-III oxidase family. As to quaternary structure, homodimer. It depends on a divalent metal cation as a cofactor.

Its subcellular location is the cytoplasm. The catalysed reaction is coproporphyrinogen III + O2 + 2 H(+) = protoporphyrinogen IX + 2 CO2 + 2 H2O. It functions in the pathway porphyrin-containing compound metabolism; protoporphyrin-IX biosynthesis; protoporphyrinogen-IX from coproporphyrinogen-III (O2 route): step 1/1. In terms of biological role, involved in the heme biosynthesis. Catalyzes the aerobic oxidative decarboxylation of propionate groups of rings A and B of coproporphyrinogen-III to yield the vinyl groups in protoporphyrinogen-IX. The chain is Oxygen-dependent coproporphyrinogen-III oxidase from Aromatoleum aromaticum (strain DSM 19018 / LMG 30748 / EbN1) (Azoarcus sp. (strain EbN1)).